The primary structure comprises 418 residues: Glutamyl-tRNA reductase (418 aa).

Substrate contacts are provided by residues Thr-49–Arg-52, Ser-109, Glu-114–Gln-116, and Gln-120. Cys-50 (nucleophile) is an active-site residue. Position 189 to 194 (Gly-189 to Ile-194) interacts with NADP(+).

The protein belongs to the glutamyl-tRNA reductase family. Homodimer.

It carries out the reaction (S)-4-amino-5-oxopentanoate + tRNA(Glu) + NADP(+) = L-glutamyl-tRNA(Glu) + NADPH + H(+). Its pathway is porphyrin-containing compound metabolism; protoporphyrin-IX biosynthesis; 5-aminolevulinate from L-glutamyl-tRNA(Glu): step 1/2. Catalyzes the NADPH-dependent reduction of glutamyl-tRNA(Glu) to glutamate 1-semialdehyde (GSA). In Pectobacterium atrosepticum (strain SCRI 1043 / ATCC BAA-672) (Erwinia carotovora subsp. atroseptica), this protein is Glutamyl-tRNA reductase.